We begin with the raw amino-acid sequence, 253 residues long: uncharacterized protein (253 aa).

The segment covering 1 to 14 (MKVPILSRLRSLSS) has biased composition (low complexity). Disordered regions lie at residues 1–192 (MKVP…PKSS) and 212–253 (PETV…AIQL). 2 stretches are compositionally biased toward basic and acidic residues: residues 17–30 (RNNE…EHQV) and 45–60 (KSDK…KSGE). Composition is skewed to low complexity over residues 63–104 (PSTP…GSDS) and 111–154 (KTLS…QTPR). Residues 215-235 (VVTSTPRQQSRPPSAQNTPNF) are compositionally biased toward polar residues. Low complexity predominate over residues 236–253 (TSQGGSRSTSRRQSAIQL).

This is an uncharacterized protein from Dictyostelium discoideum (Social amoeba).